The chain runs to 325 residues: MKTEKRYLVPGDYMADPAVHVFDGKLYIYPSHDWESGIAENDNGDHFNMKDYHVYSMDDVMNGEIKDHGVVLSTEDIPWAGRQLWDCDVVCKDGKYYMYFPLKDQNDIFRIGVAVSDKPYGPFIPEANPMKGSYSIDPAVWDDGDGNYYIYFGGLWGGQLQRYRNNKALESAILPEGEEEAIPSRVARLSEDMMEFAEEPRAVVILDEDGKPLTAGDTERRFFEASWMHKYNGKYYFSYSTGDTHLLCYATGDNPYGPFTYQGVILTPVVGWTTHHAIVEFKGKWYLFHHDCVPSEGKTWLRSLKVCELQYDADGRIITIEGKDE.

Aspartate 16 acts as the Proton acceptor in catalysis. Glutamate 224 serves as the catalytic Proton donor.

It belongs to the glycosyl hydrolase 43 family.

It catalyses the reaction Hydrolysis of (1-&gt;4)-beta-D-xylans, to remove successive D-xylose residues from the non-reducing termini.. The catalysed reaction is Hydrolysis of terminal non-reducing alpha-L-arabinofuranoside residues in alpha-L-arabinosides.. The sequence is that of Xylosidase/arabinosidase (xsa) from Bacteroides ovatus.